A 322-amino-acid chain; its full sequence is Breast cancer metastasis-suppressor 1-like protein (322 aa).

A compositionally biased stretch (basic and acidic residues) spans 1-16 (MPVHSREKKESNHNDM). A disordered region spans residues 1–56 (MPVHSREKKESNHNDMEVDYPENEGTSSEEDDSDSSSGSEEGDSSEMDDEDCERRR). Residues 17 to 51 (EVDYPENEGTSSEEDDSDSSSGSEEGDSSEMDDED) show a composition bias toward acidic residues. 2 coiled-coil regions span residues 50–82 (EDCERRRMECLDEMSNLEKQFTDLKDQLYKERL) and 147–178 (EKLLLYDTVQSELEEKIRRLEEDRHSIDITSE).

The protein belongs to the BRMS1 family.

The protein localises to the nucleus. In terms of biological role, involved in the histone deacetylase (HDAC1)-dependent transcriptional repression activity. The polypeptide is Breast cancer metastasis-suppressor 1-like protein (brms1l) (Xenopus tropicalis (Western clawed frog)).